The sequence spans 428 residues: Mitochondrial import inner membrane translocase subunit TIM50-C (428 aa).

Residues Leu-59–Ala-79 traverse the membrane as a helical segment. Residues Arg-80 to Arg-428 lie on the Mitochondrial intermembrane side of the membrane. Positions Phe-112–Asn-138 are disordered. Positions Glu-124–Asn-138 are enriched in basic and acidic residues. The FCP1 homology domain maps to Tyr-224–Ile-367.

Belongs to the TIM50 family. As to quaternary structure, component of the TIM23 complex at least composed of Tim23, Tim17 (Tim17a1, Tim17a2 or Tim17b1) and a Tim50.

The protein resides in the mitochondrion inner membrane. Essential component of the TIM23 complex, a complex that mediates the translocation of transit peptide-containing proteins across the mitochondrial inner membrane. The chain is Mitochondrial import inner membrane translocase subunit TIM50-C (ttm50) from Drosophila melanogaster (Fruit fly).